Here is a 3469-residue protein sequence, read N- to C-terminus: MATRRVGRGCWEVSPTERRPCAGLRGPAAEEEAASPPVLFLSHFCRSPFLCFGDVRLGTSRTLPLTLDNPNEEVAEVEISHLPAADLGFSVSQRRFVLQPKEKIVISVNWTPFKEGRVRETMTFLVNDVLKHQAILLGNAEEQKKKKRNLWDTIKKKKISASTSHNRRVSNIQNVKTFSVSQKVDRVRSPLHACENLAMNEGGPPTENNHLTLEENKILISPISPAFSECHGATCLPLSVRRSTAYSSLHALENRELLNVDSANVSKDNFNEKVVSETSFNSINVSDQSGENNKLILTPNYSSTLNITQSQRNFLSPDSFVNNSHGENNELELGTCLSSDMFMKDNPKPMLLESTTAREMYQKILSPDSFIKDNYGLNQNLESESVXSILSPNQMACMCTSQQTYKVPSSNENSQVPQSLQDWRKSKVFPCVPECQGSKSPKATFEELVEMKSNCCSFIKQNQPKFPAVKDISSHSHNKQPKRRPILSATVTKRKPTRTRENQTEINKPKAKRCLNSAVGENEKIINNQKEKEDFYSYLPIIDPVLSKSKSYKNEITPSLTTASVARKRKSDGSMGDANERVAVTEHTEVQEIKRIHFSPSEPKTATVKKTKNVITPISKCVSNREKLSLKKKTEFKTPIFKTSKRTKPIIAVAQSNLTFIKSLKTDIPRHPMPFAAKNMFYDERWKEKQEQGFTWWLNFILTPDDFTVKTNISEVNAATLLLGVENQHKISVPRAPTKEEMSLRAYTARCMLNRLRRAACRLFTSEKMVKAIKKLEIEIEARRLVVRKDRHLWKDVGERQKVLNWLLSYNPLWLRIGLETVYGELISLEDNSDVTGLAVFILSRLLWNPDIAAEYRHPTVPHLYGDGHEEALSKFTLKKLLLLVCFLDYAKISRLIDHDPCLFCKDAEFKASKEILLAFSRDFLSGEGDLSRHLGLLGLPVNHVQTPFDEFDFAVTNLAVDLQCGVRLVRTMELLTQNWDLSKKLRIPAISRLQKMHNVDIVLQVLKSRGIELSDEHGNTILSKNIVDRHREKTLGLLWKIVFAFQVNISLNLDQLKEEIAFLKHTKSIKKTVSLLSCHSDALTNKKKGKRDSGSFEQYGENIKLLMDWVNAVCAFYNKKVENFTVSFSDGRVLCYLIHHYHPCYVPFDAISQRTTQTVECTHTGSVVLNSSSESDESSLDMSLKAFDQENTSELYKELLENEKKNFHLVRSAVRDLGGIPAMINHSDMSNTIPDEKVVITYLSFLCARLLDLRKEIRAARLIQTTWRKYKLKTDLKRHQERDKAARIIQSAVINFLRKQRLRKTLNAALIIQKYWRRVLAQKKLLMLKKEKLERVQNKAASLIQGYWRRYSTRKRFLKLKYYSIVLQSRIRMIIAVTCYKRYLWATVTIQRHWRASLRRKQDQQRYEKLKSSSLIIQAMFRRWKQRKMQLQVKATITLQRAFREWHLRKRAKEEKSAIVIQSWYRMHKQLRKYVYVRSCVVIIQKRFRCFQAQKLYKRRKESILTIQKYYRAYLKGKIERTNYLQKRAAAIQLQAAFRRLKAHNLHRQIRAACVIQSYWRMRQDRVRFLNLKKIIIKLQAHVRKHQQLRKYKKMKKAAVIIQTHFQAYIFARKVLASYQKTRSAVIVLQSAYRGMQARKMYIHILTSVIKIQSYYRAYVSKKEFLSLKNATIKLQSIVRMKQTRKQYLHLRATALFIQQCYHSKKLAAQKREEYMQMRESCIKLQAFVRGYLVRKQMRLQRKAVISLQSYFRMRKSRQYYLKMYKAVIIIQNYYHSYKAQVNQRKNFLQVKKAATCLQAAYRGYKVRQLIKQQSVAAVKIQSAFRGYSKRVKYQSVLQSIIKIQRWYRAYKTLHGIRTHFLKTKAAVISLQSAYRGWKVRKQIRREHQAAMKIQSAFRMAKAQKQFRLFKTAALVIQQHLRAWTAGRKQRMEYIELRHSVLMLQSMWKGKALRRQLQRQHKCAVIIQSYYRMHVQQKKWKIMKKAALLIQKYYRAYSIGREQHCLYLKTKAAVVTLQSAYRGMKVRKRIKDCNKAAITIQSKYRAYKTKKKYAAYRASAIIIQRWYRSIKITNHQYKEYLNLKKTAIKIQAVYRGIRVRRHIQCMHRAATFIKAMFKMHQSRIRYHTMRKATIVIQVRYRAYYQGKMQREDYLKFLKAVNVLQANFRGVRVRRTLRKLQIAATVIQSNYRRYRQQTYFNKLKKITKTVQQRYRAVKERNIQFQRYNKLRHSVIHIQAIFRGMKVRRHLKTMHIAATLIQRRFRTLMMRRRFLSLKKTAIWIQRKYRAHLCTKHHLQFLRLQNAAIKIQSSYRRWVVRKKMREMHRAATFIQATFRMHRVHMRYQALKQASVVIQQQYQANRAAKLQRQHYLRQRHSAVILQAAFRGMETRRRLKSMHSSAILIQSRFRSLLVRRRFISLKKAAIFIQRKYRATICAKHNLHQFLQLRKAAVTIQSSYRRLMVKKKLQEMHRAAVLIQATFRMHKTYITFQTWKHASILIQQHYRTYRASKLQRENYTKQWHSALIIQAAYRGMKARQLLREKRKAAIIIQSTYRMYRQYCLYQNLQWATKIIQEKYRANKKKHKALQHNELKKAEACVQASFQDMNIKKLIQEQHQTSLTIQKHCNAFKIKKQYLHLRAPVVSIQRRYRKLTAVHTQAVICIQSYYRGFKVRRDIQNMHLAATRIQSLYRMHRAKVDYQTKKTAIVVIQNYYRLYVRVKTERNSFLAVQKSVRTIQAAFRSMKVRQKLKNLSQEKMAAIVSPSAVYCYRIEAQSEAVGSEGVIIQEWYKTSCLAHSQEAEYHSQSRAAVTIQKAFRRMITRKLETQKCAALRIQFFLQMAVYRRRFVQQKRAAVTLQHYFRTWQTRKQFLLYRKAAVVLQNHYRAFLSAKHQRQVYLQIRSSVIIIQARTKGFIQKRKFQKIKNSTIKIQAVWRRYRDKKSLCKVKAACKIQAWYRCWRAHKEYLAILKAVKIIQGSFYXKLERTRFLNMRASAIIIQRKWRAILSAKIAHEHFLMIQRHQAACLIQAHFRGYKGRQVFLRQKSAALNIQKYIRAREAGRRERIKYIELKKSTVTLQALVRGWLVRKRILEQRAKIRLLHFTAAAYYHLKALRIQRAYKLYLALKNANKQVNSAICIQRWFRARLQQKRFIQICHSIKKIEHEGQERLSQQNRAASVIQKAVRHFLLRKKQEKFTSGIIKFQALWRGYSWRKNNDCTKIKAIRLSLQVVNREIREENKLYRRAALALHYLLTYKHLSAILEAVKHLEVVTRLSPFCCENMAQSGAISKIFVLIRSCNRSVPCMEVIRYAVQVLLNVAKYEKTTSAVYDVENCVDTLLELLQMYREKPGNKVADKSGSIFTKTCCLLATLLKTTNRASDVRSRSKVVDRIYSLYKLTAYKHKVNTERLHYKQKKDSSTSIPFIPETPVRTRIVSRLKPDWVLRRDNLEEITNPLQAIQMVMDTLGIPY.

5 positions are modified to phosphoserine: Ser279, Ser282, Ser366, Ser391, and Ser419. The interval 469–488 (VKDISSHSHNKQPKRRPILS) is disordered. Positions 476-485 (SHNKQPKRRP) are enriched in basic residues. Phosphoserine is present on Ser599. The Calponin-homology (CH) 1 domain occupies 911–1047 (KASKEILLAF…LLWKIVFAFQ (137 aa)). The stretch at 1048-1069 (VNISLNLDQLKEEIAFLKHTKS) forms a coiled coil. Position 1094 is a phosphoserine (Ser1094). The 152-residue stretch at 1101–1252 (GENIKLLMDW…YLSFLCARLL (152 aa)) folds into the Calponin-homology (CH) 2 domain. 38 consecutive IQ domains span residues 1338–1369 (QNKAASLIQGYWRRYSTRKRFLKLKYYSIVLQ), 1384–1413 (YLWATVTIQRHWRASLRRKQDQQRYEKLKS), 1573–1604 (LKKIIIKLQAHVRKHQQLRKYKKMKKAAVIIQ), 1623–1652 (TRSAVIVLQSAYRGMQARKMYIHILTSVIK), 1646–1675 (ILTSVIKIQSYYRAYVSKKEFLSLKNATIK), 1669–1700 (LKNATIKLQSIVRMKQTRKQYLHLRATALFIQ), 1719–1748 (MRESCIKLQAFVRGYLVRKQMRLQRKAVIS), 1742–1773 (QRKAVISLQSYFRMRKSRQYYLKMYKAVIIIQ), 1792–1821 (VKKAATCLQAAYRGYKVRQLIKQQSVAAVK), 1815–1844 (QSVAAVKIQSAFRGYSKRVKYQSVLQSIIK), 1865–1894 (TKAAVISLQSAYRGWKVRKQIRREHQAAMK), 1888–1919 (EHQAAMKIQSAFRMAKAQKQFRLFKTAALVIQ), 1938–1969 (LRHSVLMLQSMWKGKALRRQLQRQHKCAVIIQ), 1961–1992 (QHKCAVIIQSYYRMHVQQKKWKIMKKAALLIQ), 2011–2040 (TKAAVVTLQSAYRGMKVRKRIKDCNKAAIT), 2034–2065 (CNKAAITIQSKYRAYKTKKKYAAYRASAIIIQ), 2084–2115 (LKKTAIKIQAVYRGIRVRRHIQCMHRAATFIK), 2107–2138 (MHRAATFIKAMFKMHQSRIRYHTMRKATIVIQ), 2157–2188 (FLKAVNVLQANFRGVRVRRTLRKLQIAATVIQ), 2180–2209 (LQIAATVIQSNYRRYRQQTYFNKLKKITKT), 2230–2261 (LRHSVIHIQAIFRGMKVRRHLKTMHIAATLIQ), 2253–2284 (MHIAATLIQRRFRTLMMRRRFLSLKKTAIWIQ), 2302–2333 (LQNAAIKIQSSYRRWVVRKKMREMHRAATFIQ), 2325–2356 (MHRAATFIQATFRMHRVHMRYQALKQASVVIQ), 2375–2406 (QRHSAVILQAAFRGMETRRRLKSMHSSAILIQ), 2398–2429 (MHSSAILIQSRFRSLLVRRRFISLKKAAIFIQ), 2448–2479 (LRKAAVTIQSSYRRLMVKKKLQEMHRAAVLIQ), 2521–2552 (QWHSALIIQAAYRGMKARQLLREKRKAAIIIQ), 2657–2686 (HTQAVICIQSYYRGFKVRRDIQNMHLAATR), 2680–2711 (MHLAATRIQSLYRMHRAKVDYQTKKTAIVVIQ), 2730–2759 (VQKSVRTIQAAFRSMKVRQKLKNLSQEKMA), 2806–2837 (QSRAAVTIQKAFRRMITRKLETQKCAALRIQF), 2851–2882 (QKRAAVTLQHYFRTWQTRKQFLLYRKAAVVLQ), 2901–2930 (IRSSVIIIQARTKGFIQKRKFQKIKNSTIK), 2946–2977 (KVKAACKIQAWYRCWRAHKEYLAILKAVKIIQ), 3021–3050 (RHQAACLIQAHFRGYKGRQVFLRQKSAALN), 3071–3102 (LKKSTVTLQALVRGWLVRKRILEQRAKIRLLH), and 3173–3202 (QNRAASVIQKAVRHFLLRKKQEKFTSGIIK).

The protein localises to the cytoplasm. It is found in the cytoskeleton. Its subcellular location is the spindle. It localises to the nucleus. Functionally, probable role in mitotic spindle regulation and coordination of mitotic processes. May have a preferential role in regulating neurogenesis. The protein is Abnormal spindle-like microcephaly-associated protein homolog (ASPM) of Saimiri boliviensis boliviensis (Bolivian squirrel monkey).